Consider the following 156-residue polypeptide: ATP synthase subunit b (156 aa).

A helical membrane pass occupies residues leucine 7 to leucine 29.

This sequence belongs to the ATPase B chain family. In terms of assembly, F-type ATPases have 2 components, F(1) - the catalytic core - and F(0) - the membrane proton channel. F(1) has five subunits: alpha(3), beta(3), gamma(1), delta(1), epsilon(1). F(0) has three main subunits: a(1), b(2) and c(10-14). The alpha and beta chains form an alternating ring which encloses part of the gamma chain. F(1) is attached to F(0) by a central stalk formed by the gamma and epsilon chains, while a peripheral stalk is formed by the delta and b chains.

Its subcellular location is the cell inner membrane. F(1)F(0) ATP synthase produces ATP from ADP in the presence of a proton or sodium gradient. F-type ATPases consist of two structural domains, F(1) containing the extramembraneous catalytic core and F(0) containing the membrane proton channel, linked together by a central stalk and a peripheral stalk. During catalysis, ATP synthesis in the catalytic domain of F(1) is coupled via a rotary mechanism of the central stalk subunits to proton translocation. Its function is as follows. Component of the F(0) channel, it forms part of the peripheral stalk, linking F(1) to F(0). The chain is ATP synthase subunit b from Saccharophagus degradans (strain 2-40 / ATCC 43961 / DSM 17024).